Consider the following 353-residue polypeptide: UPF0283 membrane protein YcjF (353 aa).

Positions 1–19 are enriched in basic and acidic residues; it reads MSEPLKPRIDFAEPLKEEP. The tract at residues 1–35 is disordered; that stretch reads MSEPLKPRIDFAEPLKEEPTSAFKAQQTFSEAESR. 3 helical membrane-spanning segments follow: residues 70 to 90, 100 to 120, and 213 to 233; these read MVMGGLALFGASVVGQGVQWT, VALGGCAAGALIIGAGVGSVV, and ESTLMIAVSSLALVDMAFIAW.

It belongs to the UPF0283 family.

The protein resides in the cell inner membrane. The chain is UPF0283 membrane protein YcjF from Salmonella enteritidis PT4 (strain P125109).